The primary structure comprises 420 residues: Bile acid-CoA:amino acid N-acyltransferase (420 aa).

Lys-40 carries the post-translational modification N6-succinyllysine. At Ser-125 the chain carries Phosphoserine. Residues Cys-235 and Asp-328 each act as charge relay system in the active site. 2 positions are modified to N6-succinyllysine: Lys-346 and Lys-350. His-362 acts as the Charge relay system in catalysis. Lys-409 carries the post-translational modification N6-succinyllysine. Residue Ser-418 is modified to Phosphoserine.

The protein belongs to the C/M/P thioester hydrolase family. Monomer. As to expression, highly expressed in liver, kidney, gallbladder, proximal intestine and distal intestine. Weakly expressed in adrenal gland, lung, brain and muscle.

Its subcellular location is the cytoplasm. The protein resides in the cytosol. It is found in the peroxisome. It carries out the reaction choloyl-CoA + glycine = glycocholate + CoA + H(+). The enzyme catalyses hexadecanoyl-CoA + H2O = hexadecanoate + CoA + H(+). The catalysed reaction is choloyl-CoA + H2O = cholate + CoA + H(+). It catalyses the reaction chenodeoxycholoyl-CoA + H2O = chenodeoxycholate + CoA + H(+). It carries out the reaction eicosanoyl-CoA + H2O = eicosanoate + CoA + H(+). The enzyme catalyses octadecanoyl-CoA + H2O = octadecanoate + CoA + H(+). The catalysed reaction is docosanoyl-CoA + H2O = docosanoate + CoA + H(+). It catalyses the reaction tetracosanoyl-CoA + H2O = tetracosanoate + CoA + H(+). It carries out the reaction hexacosanoyl-CoA + H2O = hexacosanoate + CoA + H(+). The enzyme catalyses dodecanoyl-CoA + H2O = dodecanoate + CoA + H(+). The catalysed reaction is tetradecanoyl-CoA + H2O = tetradecanoate + CoA + H(+). It catalyses the reaction choloyl-CoA + taurine = taurocholate + CoA + H(+). It carries out the reaction chenodeoxycholoyl-CoA + glycine = glycochenodeoxycholate + CoA + H(+). The enzyme catalyses chenodeoxycholoyl-CoA + taurine = taurochenodeoxycholate + CoA + H(+). The catalysed reaction is eicosanoyl-CoA + glycine = N-eicosanoylglycinate + CoA + H(+). It catalyses the reaction hexacosanoyl-CoA + glycine = N-hexacosanoylglycine + CoA + H(+). It carries out the reaction docosanoyl-CoA + glycine = N-docosanoylglycine + CoA + H(+). Catalyzes the amidation of bile acids (BAs) with the amino acid taurine. Selective for taurine conjugation of cholyl CoA and only taurine-conjugated BAs are found in bile. Amidation of BAs in the liver with taurine prior to their excretion into bile is an important biochemical event in bile acid metabolism. This conjugation (or amidation) plays several important biological roles in that it promotes the secretion of BAs and cholesterol into bile and increases the detergent properties of BAs in the intestine, which facilitates lipid and vitamin absorption. May also act as an acyl-CoA thioesterase that regulates intracellular levels of free fatty acids. In vitro, catalyzes the hydrolysis of long- and very long-chain saturated acyl-CoAs to the free fatty acid and coenzyme A (CoASH), and conjugates glycine to these acyl-CoAs. The protein is Bile acid-CoA:amino acid N-acyltransferase (Baat) of Mus musculus (Mouse).